The sequence spans 493 residues: Lysine--tRNA ligase (493 aa).

Mg(2+)-binding residues include Glu-402 and Glu-409.

Belongs to the class-II aminoacyl-tRNA synthetase family. As to quaternary structure, homodimer. Mg(2+) is required as a cofactor.

The protein localises to the cytoplasm. It carries out the reaction tRNA(Lys) + L-lysine + ATP = L-lysyl-tRNA(Lys) + AMP + diphosphate. This Ureaplasma urealyticum serovar 10 (strain ATCC 33699 / Western) protein is Lysine--tRNA ligase.